Reading from the N-terminus, the 561-residue chain is Potassium-transporting ATPase potassium-binding subunit (561 aa).

Helical transmembrane passes span 4–24, 65–85, 133–153, 177–197, 253–273, 285–305, 380–400, 417–437, 484–504, and 528–548; these read IVMQ…PLGI, AVSV…VLML, IGLT…LFAV, LYIL…QGVV, FTNL…VVMF, AIMT…TISE, GLYG…LLVG, MVCL…AVAV, MVGA…ALYL, and FIGL…LPAL.

This sequence belongs to the KdpA family. In terms of assembly, the system is composed of three essential subunits: KdpA, KdpB and KdpC.

The protein localises to the cell membrane. In terms of biological role, part of the high-affinity ATP-driven potassium transport (or Kdp) system, which catalyzes the hydrolysis of ATP coupled with the electrogenic transport of potassium into the cytoplasm. This subunit binds the extracellular potassium ions and delivers the ions to the membrane domain of KdpB through an intramembrane tunnel. This Listeria monocytogenes serovar 1/2a (strain ATCC BAA-679 / EGD-e) protein is Potassium-transporting ATPase potassium-binding subunit.